A 30-amino-acid polypeptide reads, in one-letter code: Cysteine-rich venom protein mossambin (30 aa).

The segment at 1-30 (NVDFNSESTRRKKKQNEIVDLHNSLRRTVN) is disordered.

It belongs to the CRISP family. Contains 8 disulfide bonds. As to expression, expressed by the venom gland.

It is found in the secreted. Inhibits calcium-activated potassium channels (KCa), voltage-gated potassium channel (Kv), and the calcium release channel/ryanodine receptor (RyR). The polypeptide is Cysteine-rich venom protein mossambin (Naja mossambica (Mozambique spitting cobra)).